A 50-amino-acid polypeptide reads, in one-letter code: U37-theraphotoxin-Cg1a (50 aa).

An N-terminal signal peptide occupies residues 1–19 (MRVLLIIAGLALLSVVCYT).

The protein belongs to the neurotoxin 10 (Hwtx-1) family. 67 (Jztx-67) subfamily. Expressed by the venom gland.

It localises to the secreted. This chain is U37-theraphotoxin-Cg1a, found in Chilobrachys guangxiensis (Chinese earth tiger tarantula).